The primary structure comprises 510 residues: Probable gamma-aminobutyrate transaminase 3, mitochondrial (510 aa).

A mitochondrion-targeting transit peptide spans 1 to 41 (MICRSLLLLRSNAASKASNIVKHVAATGCLPKYSSEAPARY). 166 to 167 (GS) provides a ligand contact to pyridoxal 5'-phosphate. Tyr199 serves as a coordination point for substrate. Position 306 (Asp306) interacts with pyridoxal 5'-phosphate. Residue Lys335 participates in substrate binding. Lys335 is modified (N6-(pyridoxal phosphate)lysine).

It belongs to the class-III pyridoxal-phosphate-dependent aminotransferase family.

Its subcellular location is the mitochondrion. The enzyme catalyses 4-aminobutanoate + pyruvate = succinate semialdehyde + L-alanine. It catalyses the reaction 4-aminobutanoate + glyoxylate = succinate semialdehyde + glycine. Its function is as follows. Transaminase that degrades gamma-amino butyric acid (GABA). This chain is Probable gamma-aminobutyrate transaminase 3, mitochondrial, found in Oryza sativa subsp. japonica (Rice).